Reading from the N-terminus, the 139-residue chain is Putative pre-16S rRNA nuclease (139 aa).

The protein belongs to the YqgF nuclease family.

The protein resides in the cytoplasm. Functionally, could be a nuclease involved in processing of the 5'-end of pre-16S rRNA. In Rubrobacter xylanophilus (strain DSM 9941 / JCM 11954 / NBRC 16129 / PRD-1), this protein is Putative pre-16S rRNA nuclease.